The following is a 196-amino-acid chain: Molybdenum cofactor guanylyltransferase (196 aa).

Residues 10 to 12 (LAG), K23, N51, D69, and D99 each bind GTP. D99 contacts Mg(2+).

The protein belongs to the MobA family. In terms of assembly, monomer. It depends on Mg(2+) as a cofactor.

It localises to the cytoplasm. It catalyses the reaction Mo-molybdopterin + GTP + H(+) = Mo-molybdopterin guanine dinucleotide + diphosphate. Transfers a GMP moiety from GTP to Mo-molybdopterin (Mo-MPT) cofactor (Moco or molybdenum cofactor) to form Mo-molybdopterin guanine dinucleotide (Mo-MGD) cofactor. The protein is Molybdenum cofactor guanylyltransferase of Shewanella woodyi (strain ATCC 51908 / MS32).